Reading from the N-terminus, the 68-residue chain is Conotoxin phi-MiXXVIIA (68 aa).

The signal sequence occupies residues 1–29; it reads MRFFFLLLTVALFLTSITGDDAERMLGMK. The propeptide occupies 30-35; that stretch reads EGGYVR. 4 disulfides stabilise this stretch: Cys38/Cys49, Cys42/Cys51, Cys45/Cys56, and Cys50/Cys61.

This sequence belongs to the conotoxin G2 superfamily. 1 family. In terms of tissue distribution, expressed by the venom duct.

Its subcellular location is the secreted. This peptide promotes cell proliferation (EC(50)=17.85 uM) and inhibits apoptosis (EC(50)=2.2 uM). This is Conotoxin phi-MiXXVIIA from Conus miles (Soldier cone).